Here is a 201-residue protein sequence, read N- to C-terminus: Orotidine 5'-phosphate decarboxylase (201 aa).

Substrate is bound by residues Asp8, Lys26, 52 to 61, Thr106, Arg153, Gln161, Gly180, and Arg181; that span reads DLKFCDIPST. The active-site Proton donor is the Lys54.

It belongs to the OMP decarboxylase family. Type 1 subfamily. As to quaternary structure, homodimer.

The enzyme catalyses orotidine 5'-phosphate + H(+) = UMP + CO2. Its pathway is pyrimidine metabolism; UMP biosynthesis via de novo pathway; UMP from orotate: step 2/2. In terms of biological role, catalyzes the decarboxylation of orotidine 5'-monophosphate (OMP) to uridine 5'-monophosphate (UMP). The chain is Orotidine 5'-phosphate decarboxylase (pyrF) from Thermotoga maritima (strain ATCC 43589 / DSM 3109 / JCM 10099 / NBRC 100826 / MSB8).